The sequence spans 473 residues: 6-phosphogluconate dehydrogenase, decarboxylating (473 aa).

Residues 10–15, 33–35, 74–76, and N102 each bind NADP(+); these read GMAVMG, NRT, and VKS. Residues N102 and 128-130 each bind substrate; that span reads SGG. Residue K182 is the Proton acceptor of the active site. 185–186 lines the substrate pocket; the sequence is HN. E189 functions as the Proton donor in the catalytic mechanism. Residues Y190, K260, R287, R446, and H452 each coordinate substrate.

Belongs to the 6-phosphogluconate dehydrogenase family. As to quaternary structure, homodimer.

It catalyses the reaction 6-phospho-D-gluconate + NADP(+) = D-ribulose 5-phosphate + CO2 + NADPH. Its pathway is carbohydrate degradation; pentose phosphate pathway; D-ribulose 5-phosphate from D-glucose 6-phosphate (oxidative stage): step 3/3. Functionally, catalyzes the oxidative decarboxylation of 6-phosphogluconate to ribulose 5-phosphate and CO(2), with concomitant reduction of NADP to NADPH. The protein is 6-phosphogluconate dehydrogenase, decarboxylating (gnd) of Buchnera aphidicola subsp. Schizaphis graminum (strain Sg).